Consider the following 141-residue polypeptide: Protein archease (141 aa).

Ca(2+) contacts are provided by Asp19 and Asp140.

It belongs to the archease family.

Functionally, activates the tRNA-splicing ligase complex by facilitating the enzymatic turnover of catalytic subunit RtcB. Acts by promoting the guanylylation of RtcB, a key intermediate step in tRNA ligation. Can also alter the NTP specificity of RtcB such that ATP, dGTP or ITP is used efficiently. In Thermoplasma acidophilum (strain ATCC 25905 / DSM 1728 / JCM 9062 / NBRC 15155 / AMRC-C165), this protein is Protein archease.